We begin with the raw amino-acid sequence, 224 residues long: Probable GTP-binding protein EngB (224 aa).

An EngB-type G domain is found at Val-31 to Pro-204. GTP-binding positions include Gly-39–Ser-46, Gly-65–Leu-69, Asp-83–Gly-86, Thr-150–Asp-153, and Phe-183–Ser-185. Positions 46 and 67 each coordinate Mg(2+).

This sequence belongs to the TRAFAC class TrmE-Era-EngA-EngB-Septin-like GTPase superfamily. EngB GTPase family. Requires Mg(2+) as cofactor.

Its function is as follows. Necessary for normal cell division and for the maintenance of normal septation. This chain is Probable GTP-binding protein EngB, found in Shewanella piezotolerans (strain WP3 / JCM 13877).